The following is a 254-amino-acid chain: 5'/3'-nucleotidase SurE (254 aa).

Residues D9, D10, S40, and N93 each contribute to the a divalent metal cation site.

This sequence belongs to the SurE nucleotidase family. Requires a divalent metal cation as cofactor.

The protein localises to the cytoplasm. It catalyses the reaction a ribonucleoside 5'-phosphate + H2O = a ribonucleoside + phosphate. It carries out the reaction a ribonucleoside 3'-phosphate + H2O = a ribonucleoside + phosphate. The enzyme catalyses [phosphate](n) + H2O = [phosphate](n-1) + phosphate + H(+). Nucleotidase with a broad substrate specificity as it can dephosphorylate various ribo- and deoxyribonucleoside 5'-monophosphates and ribonucleoside 3'-monophosphates with highest affinity to 3'-AMP. Also hydrolyzes polyphosphate (exopolyphosphatase activity) with the preference for short-chain-length substrates (P20-25). Might be involved in the regulation of dNTP and NTP pools, and in the turnover of 3'-mononucleotides produced by numerous intracellular RNases (T1, T2, and F) during the degradation of various RNAs. The chain is 5'/3'-nucleotidase SurE from Yersinia pestis bv. Antiqua (strain Antiqua).